We begin with the raw amino-acid sequence, 102 residues long: ATP-dependent Clp protease adapter protein ClpS (102 aa).

This sequence belongs to the ClpS family. In terms of assembly, binds to the N-terminal domain of the chaperone ClpA.

In terms of biological role, involved in the modulation of the specificity of the ClpAP-mediated ATP-dependent protein degradation. This is ATP-dependent Clp protease adapter protein ClpS from Herminiimonas arsenicoxydans.